A 351-amino-acid polypeptide reads, in one-letter code: D-alanine--D-alanine ligase (351 aa).

Residues 141–349 (KAAFSAAGLP…ISQLVARLIE (209 aa)) form the ATP-grasp domain. An ATP-binding site is contributed by 176–231 (ETQLGYPCFIKPANLGSSVGISKAYDKKELLNGLDLAAQLDSRIVVEKNIKARELE). Mg(2+) contacts are provided by Asp-302, Glu-316, and Asn-318.

It belongs to the D-alanine--D-alanine ligase family. Mg(2+) serves as cofactor. Requires Mn(2+) as cofactor.

It is found in the cytoplasm. The enzyme catalyses 2 D-alanine + ATP = D-alanyl-D-alanine + ADP + phosphate + H(+). It participates in cell wall biogenesis; peptidoglycan biosynthesis. Cell wall formation. This is D-alanine--D-alanine ligase from Prochlorococcus marinus (strain SARG / CCMP1375 / SS120).